Reading from the N-terminus, the 348-residue chain is 3-isopropylmalate dehydrogenase (348 aa).

76–87 (GPKWTDPNNRPE) is an NAD(+) binding site. Residues R94, R104, R132, and D217 each coordinate substrate. Positions 217, 241, and 245 each coordinate Mg(2+). 275–287 (GSAPDIAGKNVAN) contributes to the NAD(+) binding site.

This sequence belongs to the isocitrate and isopropylmalate dehydrogenases family. LeuB type 1 subfamily. As to quaternary structure, homodimer. It depends on Mg(2+) as a cofactor. Mn(2+) serves as cofactor.

Its subcellular location is the cytoplasm. It carries out the reaction (2R,3S)-3-isopropylmalate + NAD(+) = 4-methyl-2-oxopentanoate + CO2 + NADH. It participates in amino-acid biosynthesis; L-leucine biosynthesis; L-leucine from 3-methyl-2-oxobutanoate: step 3/4. Catalyzes the oxidation of 3-carboxy-2-hydroxy-4-methylpentanoate (3-isopropylmalate) to 3-carboxy-4-methyl-2-oxopentanoate. The product decarboxylates to 4-methyl-2 oxopentanoate. The polypeptide is 3-isopropylmalate dehydrogenase (Staphylococcus aureus (strain MW2)).